The primary structure comprises 1074 residues: Fibrous sheath CABYR-binding protein (1074 aa).

The interval 1-73 (MEECEEPEEP…SKDNYSRKEY (73 aa)) is disordered. Serine 25, serine 57, serine 186, and serine 275 each carry phosphoserine. Disordered regions lie at residues 272-294 (QAPSPAEETSAAETATTTAKDVV) and 317-343 (LVQGALSDKPSDQQYPQGTEMAPSELP). The span at 274–290 (PSPAEETSAAETATTTA) shows a compositional bias: low complexity. At serine 365 the chain carries Phosphoserine. Disordered regions lie at residues 437-789 (VSAD…PLES) and 818-982 (GVPA…PLKT). Positions 448-467 (PPSAEDASEEVASSEVLPPS) are enriched in low complexity. A compositionally biased stretch (pro residues) spans 528-544 (VLPPPAEEAPAEVPPPL). Over residues 558-575 (EEGPAEVPLAPAEEVPAE) the composition is skewed to low complexity. 2 stretches are compositionally biased toward pro residues: residues 576 to 592 (FLPPPAEEVPAEVPPPL) and 673 to 688 (PLPPTAERPEEAPPPA). The segment covering 689 to 720 (TEEAPVEVLPPATEEAPVEVLPPATEEAPVEV) has biased composition (low complexity). Serine 1020 is subject to Phosphoserine. The segment at 1026 to 1054 (SEKELESTTLTSDKMSEGIDSVPEDVSGT) is disordered.

In terms of assembly, interacts with CABYR. Interacts with ROPN1 and ROPN1L; the interaction increases upon spermatozoa capacitation conditions. Phosphorylated by PKA upon spermatozoa capacitation conditions. As to expression, expression is restricted to testis and epididymis, expressed by spermatozoa.

It is found in the cell projection. It localises to the cilium. The protein localises to the flagellum. In terms of biological role, may be involved in the later stages of fibrous sheath biogenesis and spermatozoa capacitation. Inhibits ROPN1 and ROPN1L SUMOylation. Binds calcium. The sequence is that of Fibrous sheath CABYR-binding protein from Mus musculus (Mouse).